We begin with the raw amino-acid sequence, 207 residues long: Ribonuclease HII (207 aa).

The region spanning 18-207 (GLVAGVDEAG…VAEVLREALP (190 aa)) is the RNase H type-2 domain. Asp24, Glu25, and Asp116 together coordinate a divalent metal cation.

The protein belongs to the RNase HII family. The cofactor is Mn(2+). It depends on Mg(2+) as a cofactor.

It is found in the cytoplasm. It catalyses the reaction Endonucleolytic cleavage to 5'-phosphomonoester.. Its function is as follows. Endonuclease that specifically degrades the RNA of RNA-DNA hybrids. The sequence is that of Ribonuclease HII from Albidiferax ferrireducens (strain ATCC BAA-621 / DSM 15236 / T118) (Rhodoferax ferrireducens).